We begin with the raw amino-acid sequence, 439 residues long: Cytochrome b-c1 complex reductase subunit, mitochondrial (439 aa).

A mitochondrion-targeting transit peptide spans 1–17; it reads MIRGSSALKSLTSRRLY.

It belongs to the peptidase M16 family. UQCRC1/QCR1 subfamily. As to quaternary structure, component of the ubiquinol-cytochrome c oxidoreductase (cytochrome b-c1 complex, complex III, CIII), a multisubunit enzyme composed of 10 subunits. The complex is composed of 3 respiratory subunits cytochrome b (COB), cytochrome c1 (CYT1) and Rieske protein (RIP1), 2 core protein subunits COR1 and QCR2, and 5 low-molecular weight protein subunits QCR6, QCR7, QCR8, QCR9 and QCR10. The complex exists as an obligatory dimer and forms supercomplexes (SCs) in the inner mitochondrial membrane with a monomer or a dimer of cytochrome c oxidase (complex IV, CIV), resulting in 2 different assemblies (supercomplexes III(2)IV and III(2)IV(2)).

Its subcellular location is the mitochondrion inner membrane. In terms of biological role, component of the ubiquinol-cytochrome c oxidoreductase, a multisubunit transmembrane complex that is part of the mitochondrial electron transport chain which drives oxidative phosphorylation. The complex plays an important role in the uptake of multiple carbon sources present in different host niches. The protein is Cytochrome b-c1 complex reductase subunit, mitochondrial of Candida albicans (strain SC5314 / ATCC MYA-2876) (Yeast).